We begin with the raw amino-acid sequence, 418 residues long: Serine hydroxymethyltransferase (418 aa).

Residues L121 and 125–127 (GHL) contribute to the (6S)-5,6,7,8-tetrahydrofolate site. K230 bears the N6-(pyridoxal phosphate)lysine mark. 356-358 (SPF) lines the (6S)-5,6,7,8-tetrahydrofolate pocket.

This sequence belongs to the SHMT family. Homodimer. The cofactor is pyridoxal 5'-phosphate.

Its subcellular location is the cytoplasm. The catalysed reaction is (6R)-5,10-methylene-5,6,7,8-tetrahydrofolate + glycine + H2O = (6S)-5,6,7,8-tetrahydrofolate + L-serine. It functions in the pathway one-carbon metabolism; tetrahydrofolate interconversion. It participates in amino-acid biosynthesis; glycine biosynthesis; glycine from L-serine: step 1/1. Its function is as follows. Catalyzes the reversible interconversion of serine and glycine with tetrahydrofolate (THF) serving as the one-carbon carrier. This reaction serves as the major source of one-carbon groups required for the biosynthesis of purines, thymidylate, methionine, and other important biomolecules. Also exhibits THF-independent aldolase activity toward beta-hydroxyamino acids, producing glycine and aldehydes, via a retro-aldol mechanism. The sequence is that of Serine hydroxymethyltransferase from Pseudoalteromonas translucida (strain TAC 125).